A 1482-amino-acid chain; its full sequence is Chromosome partition protein MukB (1482 aa).

An ATP-binding site is contributed by G34–S41. Coiled-coil stretches lie at residues L337 to A468, Q509 to W604, R780 to S805, E835 to D1044, T1070 to A1115, and E1210 to V1265. Residues P666–R783 form a flexible hinge region.

This sequence belongs to the SMC family. MukB subfamily. As to quaternary structure, homodimerization via its hinge domain. Binds to DNA via its C-terminal region. Interacts, and probably forms a ternary complex, with MukE and MukF via its C-terminal region. The complex formation is stimulated by calcium or magnesium. Interacts with tubulin-related protein FtsZ.

Its subcellular location is the cytoplasm. The protein resides in the nucleoid. Its function is as follows. Plays a central role in chromosome condensation, segregation and cell cycle progression. Functions as a homodimer, which is essential for chromosome partition. Involved in negative DNA supercoiling in vivo, and by this means organize and compact chromosomes. May achieve or facilitate chromosome segregation by condensation DNA from both sides of a centrally located replisome during cell division. The sequence is that of Chromosome partition protein MukB from Serratia proteamaculans (strain 568).